Reading from the N-terminus, the 294-residue chain is ATP phosphoribosyltransferase (294 aa).

It belongs to the ATP phosphoribosyltransferase family. Long subfamily. It depends on Mg(2+) as a cofactor.

The protein resides in the cytoplasm. The catalysed reaction is 1-(5-phospho-beta-D-ribosyl)-ATP + diphosphate = 5-phospho-alpha-D-ribose 1-diphosphate + ATP. Its pathway is amino-acid biosynthesis; L-histidine biosynthesis; L-histidine from 5-phospho-alpha-D-ribose 1-diphosphate: step 1/9. With respect to regulation, feedback inhibited by histidine. Catalyzes the condensation of ATP and 5-phosphoribose 1-diphosphate to form N'-(5'-phosphoribosyl)-ATP (PR-ATP). Has a crucial role in the pathway because the rate of histidine biosynthesis seems to be controlled primarily by regulation of HisG enzymatic activity. This is ATP phosphoribosyltransferase from Prosthecochloris aestuarii (strain DSM 271 / SK 413).